Reading from the N-terminus, the 902-residue chain is Desmocollin-2 (902 aa).

Residues 1–27 form the signal peptide; that stretch reads MAAVGSMRSGSPAFGLGHLLTLAILAL. A propeptide spanning residues 28–135 is cleaved from the precursor; that stretch reads ASDACKEVVL…TEKVLSRAKR (108 aa). Cadherin domains are found at residues 136-243, 244-355, 356-471, 472-579, and 580-694; these read RWAP…YPIF, TQKL…LPTF, TRTT…GPEC, IPPM…FIPK, and QTVV…RLGP. Topologically, residues 136 to 694 are extracellular; sequence RWAPIPCSML…TGYADVRLGP (559 aa). Residue asparagine 166 is glycosylated (N-linked (GlcNAc...) asparagine). Asparagine 392, asparagine 546, and asparagine 629 each carry an N-linked (GlcNAc...) asparagine glycan. A helical membrane pass occupies residues 695–715; sequence WAILAILLGIALLFCILFTLV. The Cytoplasmic portion of the chain corresponds to 716 to 902; sequence CSVSRASKQQ…RTLAEVCAKR (187 aa). Phosphoserine occurs at positions 865, 869, and 874.

As to quaternary structure, interacts with DSP, PKP2 and JUP. Interacts with DSG3; the interaction may limit the interaction of DSC3 with p38MAPK family members and therefore repress p38MAPK signaling activation. As to expression, expressed in intestinal epithelial cells (at protein level). Expressed in the heart. Expressed in tongue, bladder, stomach, liver, kidney, and lung.

The protein localises to the cell membrane. Its subcellular location is the cell junction. It localises to the desmosome. Functionally, a component of desmosome cell-cell junctions which are required for positive regulation of cellular adhesion. Promotes timely incorporation of DSG2 into desmosome intercellular junctions and promotes interaction of desmosome cell junctions with intermediate filament cytokeratin, via modulation of DSP phosphorylation. Plays an important role in desmosome-mediated maintenance of intestinal epithelial cell intercellular adhesion strength and barrier function. Positively regulates wound healing of intestinal mucosa via promotion of epithelial cell migration, and also plays a role in mechanotransduction of force between intestinal epithelial cells and extracellular matrix. May contribute to epidermal cell positioning (stratification) by mediating differential adhesiveness between cells that express different isoforms. May promote p38MAPK signaling activation that facilitates keratinocyte migration. The protein is Desmocollin-2 (Dsc2) of Mus musculus (Mouse).